Consider the following 43-residue polypeptide: Kappa-actitoxin-Avd4p (43 aa).

3 disulfides stabilise this stretch: C4/C39, C6/C32, and C22/C40.

Its subcellular location is the secreted. The protein resides in the nematocyst. In terms of biological role, blocks Kv3 voltage-gated potassium channels. Reduces blood pressure. This is Kappa-actitoxin-Avd4p from Anemonia viridis (Snakelocks anemone).